Consider the following 175-residue polypeptide: Large ribosomal subunit protein uL10 (175 aa).

Belongs to the universal ribosomal protein uL10 family. As to quaternary structure, part of the ribosomal stalk of the 50S ribosomal subunit. The N-terminus interacts with L11 and the large rRNA to form the base of the stalk. The C-terminus forms an elongated spine to which L12 dimers bind in a sequential fashion forming a multimeric L10(L12)X complex.

Its function is as follows. Forms part of the ribosomal stalk, playing a central role in the interaction of the ribosome with GTP-bound translation factors. This chain is Large ribosomal subunit protein uL10, found in Halorhodospira halophila (strain DSM 244 / SL1) (Ectothiorhodospira halophila (strain DSM 244 / SL1)).